A 456-amino-acid polypeptide reads, in one-letter code: Probable glycine dehydrogenase (decarboxylating) subunit 1 (456 aa).

It belongs to the GcvP family. N-terminal subunit subfamily. The glycine cleavage system is composed of four proteins: P, T, L and H. In this organism, the P 'protein' is a heterodimer of two subunits.

The enzyme catalyses N(6)-[(R)-lipoyl]-L-lysyl-[glycine-cleavage complex H protein] + glycine + H(+) = N(6)-[(R)-S(8)-aminomethyldihydrolipoyl]-L-lysyl-[glycine-cleavage complex H protein] + CO2. Its function is as follows. The glycine cleavage system catalyzes the degradation of glycine. The P protein binds the alpha-amino group of glycine through its pyridoxal phosphate cofactor; CO(2) is released and the remaining methylamine moiety is then transferred to the lipoamide cofactor of the H protein. The sequence is that of Probable glycine dehydrogenase (decarboxylating) subunit 1 from Legionella pneumophila (strain Lens).